Reading from the N-terminus, the 546-residue chain is Chaperonin GroEL (546 aa).

Residues 30–33, Lys-51, 87–91, Gly-415, 479–481, and Asp-495 each bind ATP; these read TLGP, DGTTT, and NAA.

This sequence belongs to the chaperonin (HSP60) family. Forms a cylinder of 14 subunits composed of two heptameric rings stacked back-to-back. Interacts with the co-chaperonin GroES.

The protein resides in the cytoplasm. The catalysed reaction is ATP + H2O + a folded polypeptide = ADP + phosphate + an unfolded polypeptide.. In terms of biological role, together with its co-chaperonin GroES, plays an essential role in assisting protein folding. The GroEL-GroES system forms a nano-cage that allows encapsulation of the non-native substrate proteins and provides a physical environment optimized to promote and accelerate protein folding. This Xanthomonas axonopodis pv. citri (strain 306) protein is Chaperonin GroEL.